Consider the following 513-residue polypeptide: Cytochrome P450 4d10 (513 aa).

Heme is bound by residues glutamate 317 and cysteine 457.

This sequence belongs to the cytochrome P450 family. Requires heme as cofactor.

It localises to the endoplasmic reticulum membrane. Its subcellular location is the microsome membrane. May play an important role in the maintenance of specific insect-host plant relationships. May be involved in xenobiotic metabolism. The sequence is that of Cytochrome P450 4d10 (Cyp4d10) from Drosophila mettleri (Fruit fly).